The primary structure comprises 282 residues: MTEGDRELSALIQELWDNDTNRLRPGIDYRISLQGKAGDLAGVPDDSDGAGMPLFSFVDENIFKKETFLAFISLLDNYESDTGEPEIVTPEEEMENHRFLDSVIKTPTMKIAHKYLVEKRLSPEDTTGFKQQLYKIWFELYARKGSSKPDSSGFEHVFVGETRGGHTVIGFHNWIQLYLQEKLGHIDYKGYSVNANSPQPDENKHMLALQFSWKNGIKPKGSIFIGVSPEFEFSLYTLCFLMSPNERVKVSFNLYDVEIVCHHYNQKHIGTTYPVPVKYLNV.

The 275-residue stretch at 4–278 folds into the EndoU domain; that stretch reads GDRELSALIQ…IGTTYPVPVK (275 aa). Active-site residues include H156, H172, and K218.

Belongs to the ENDOU family. Monomer. The cofactor is Mn(2+).

The enzyme catalyses ribonucleotidyl-uridine-RNA = a 5'-end dephospho-uridine-RNA + a 3'-end 2',3'-cyclophospho-ribonucleotide-RNA. Its function is as follows. Endoribonuclease that cleaves single-stranded RNAs at 5' of uridylates and releases a product with a 2',3'-cyclic phosphate at the 3'-end. The UU and GU sites are more efficiently cleaved than CU and AU sites. This is Uridylate-specific endoribonuclease B (endoub) from Danio rerio (Zebrafish).